The following is a 218-amino-acid chain: Methylthioribulose-1-phosphate dehydratase (218 aa).

Zn(2+)-binding residues include H107 and H109.

The protein belongs to the aldolase class II family. MtnB subfamily. The cofactor is Zn(2+).

It catalyses the reaction 5-(methylsulfanyl)-D-ribulose 1-phosphate = 5-methylsulfanyl-2,3-dioxopentyl phosphate + H2O. Its pathway is amino-acid biosynthesis; L-methionine biosynthesis via salvage pathway; L-methionine from S-methyl-5-thio-alpha-D-ribose 1-phosphate: step 2/6. Functionally, catalyzes the dehydration of methylthioribulose-1-phosphate (MTRu-1-P) into 2,3-diketo-5-methylthiopentyl-1-phosphate (DK-MTP-1-P). The polypeptide is Methylthioribulose-1-phosphate dehydratase (Xylella fastidiosa (strain 9a5c)).